Here is a 141-residue protein sequence, read N- to C-terminus: Nucleoside diphosphate kinase (141 aa).

The ATP site is built by Lys11, Phe59, Arg87, Thr93, Arg104, and Asn114. The active-site Pros-phosphohistidine intermediate is His117.

It belongs to the NDK family. As to quaternary structure, homotetramer. The cofactor is Mg(2+).

It localises to the cytoplasm. It catalyses the reaction a 2'-deoxyribonucleoside 5'-diphosphate + ATP = a 2'-deoxyribonucleoside 5'-triphosphate + ADP. It carries out the reaction a ribonucleoside 5'-diphosphate + ATP = a ribonucleoside 5'-triphosphate + ADP. In terms of biological role, major role in the synthesis of nucleoside triphosphates other than ATP. The ATP gamma phosphate is transferred to the NDP beta phosphate via a ping-pong mechanism, using a phosphorylated active-site intermediate. This chain is Nucleoside diphosphate kinase, found in Neisseria gonorrhoeae (strain NCCP11945).